Here is a 147-residue protein sequence, read N- to C-terminus: Flagellar assembly factor FliW (147 aa).

It belongs to the FliW family. As to quaternary structure, interacts with translational regulator CsrA and flagellin(s).

The protein resides in the cytoplasm. In terms of biological role, acts as an anti-CsrA protein, binds CsrA and prevents it from repressing translation of its target genes, one of which is flagellin. Binds to flagellin and participates in the assembly of the flagellum. The polypeptide is Flagellar assembly factor FliW (Oceanobacillus iheyensis (strain DSM 14371 / CIP 107618 / JCM 11309 / KCTC 3954 / HTE831)).